A 319-amino-acid polypeptide reads, in one-letter code: Olfactory receptor 2S2 (319 aa).

Over 1–26 the chain is Extracellular; the sequence is MEKANETSPVMGFVLLRLSAHPELEK. An N-linked (GlcNAc...) asparagine glycan is attached at asparagine 5. The chain crosses the membrane as a helical span at residues 27–50; it reads TFFVLILLMYLVILLGNGVLILVT. Topologically, residues 51 to 58 are cytoplasmic; it reads ILDSRLHT. A helical membrane pass occupies residues 59-80; the sequence is PMYFFLGNLSFLDICFTTSSVP. Residues 81–101 are Extracellular-facing; the sequence is LVLDSFLTPQETISFSACAVQ. An intrachain disulfide couples cysteine 98 to cysteine 190. A helical membrane pass occupies residues 102-121; the sequence is MALSFAMAGTECLLLSMMAF. Over 122–140 the chain is Cytoplasmic; the sequence is DRYVAICNPLRYSVIMSKA. The helical transmembrane segment at 141-159 threads the bilayer; that stretch reads AYMPMAASSWAIGGAASVV. Residues 160–196 are Extracellular-facing; that stretch reads HTSLAIQLPFCGDNVINHFTCEILAVLKLACADISIN. The chain crosses the membrane as a helical span at residues 197-220; it reads VISMEVTNVIFLGVPVLFISFSYV. Residues 221 to 237 lie on the Cytoplasmic side of the membrane; that stretch reads FIITTILRIPSAEGRKK. A helical transmembrane segment spans residues 238–260; that stretch reads VFSTCSAHLTVVIVFYGTLFFMY. Residues 261–279 are Extracellular-facing; it reads GKPKSKDSMGADKEDLSDK. Residues 280–299 form a helical membrane-spanning segment; that stretch reads LIPLFYGVVTPMLNPIIYSL. The Cytoplasmic portion of the chain corresponds to 300–319; that stretch reads RNKDVKAAVRRLLRPKGFTQ.

It belongs to the G-protein coupled receptor 1 family.

Its subcellular location is the cell membrane. Its function is as follows. Odorant receptor. This chain is Olfactory receptor 2S2 (OR2S2), found in Homo sapiens (Human).